The primary structure comprises 157 residues: MLECFESSPVAVAVGVSLLVLLLLCGIGCAWHWNRRESTPFTLPKFMQRRSSRQKDVTKTVSSSAYVISPSMKASVESKGHKSTAKRNKMHGNYENVEVCPPCTEGTTEKALYENTQPSNLEEHVYGNQTDPLYYNFQKPSPPPPQDDDIYILPDCD.

A helical transmembrane segment spans residues 10–30; sequence VAVAVGVSLLVLLLLCGIGCA. Residues 117-157 form a disordered region; that stretch reads QPSNLEEHVYGNQTDPLYYNFQKPSPPPPQDDDIYILPDCD. The segment covering 146–157 has biased composition (acidic residues); sequence QDDDIYILPDCD.

Belongs to the GAPT family. As to quaternary structure, interacts with GRB2. Expressed primarily in B220+ splenocytes and total bone marrow cells. Expressed at lower levels in mast cells and dendritic cells. Not detected in T-cells and macrophages (at protein level).

The protein localises to the cell membrane. Functionally, negatively regulates B-cell proliferation following stimulation through the B-cell receptor. May play an important role in maintenance of marginal zone (MZ) B-cells. The chain is Protein GAPT (Gapt) from Mus musculus (Mouse).